We begin with the raw amino-acid sequence, 251 residues long: Indole-3-glycerol phosphate synthase (251 aa).

Positions 1 to 12 are enriched in polar residues; sequence MDDSSSLASPVQ. Residues 1–27 form a disordered region; it reads MDDSSSLASPVQSILAAARRRDPPTRR.

The protein belongs to the TrpC family.

It catalyses the reaction 1-(2-carboxyphenylamino)-1-deoxy-D-ribulose 5-phosphate + H(+) = (1S,2R)-1-C-(indol-3-yl)glycerol 3-phosphate + CO2 + H2O. The protein operates within amino-acid biosynthesis; L-tryptophan biosynthesis; L-tryptophan from chorismate: step 4/5. This Halobacterium salinarum (strain ATCC 700922 / JCM 11081 / NRC-1) (Halobacterium halobium) protein is Indole-3-glycerol phosphate synthase.